The sequence spans 550 residues: Tyrosinase HcTyr2 (550 aa).

Residues histidine 56, histidine 84, histidine 93, histidine 282, histidine 286, and histidine 326 each contribute to the Cu cation site.

Belongs to the tyrosinase family. It depends on Cu(2+) as a cofactor.

It catalyses the reaction L-tyrosine + O2 = L-dopaquinone + H2O. The catalysed reaction is 2 L-tyrosine + O2 = 2 L-dopa. It carries out the reaction 2 L-dopa + O2 = 2 L-dopaquinone + 2 H2O. Functionally, copper-containing oxidase that catalyzes the conversion of L-tyrosine to L-dopa and then to L-dopaquinone. Can use various phenols such as p-coumaric acid, phenol, pyrocatechol, syringol or pyrogallol. Accepts several of the constituents of lignin and potentially participates in lignin functionalization. The sequence is that of Tyrosinase HcTyr2 from Hahella sp. (strain CCB-MM4).